The primary structure comprises 410 residues: Lissencephaly-1 homolog (410 aa).

The LisH domain occupies 7 to 39; the sequence is QRDELNRAIADYLRSNGYEEAYSVFKKEAELDM. The stretch at 56 to 82 forms a coiled coil; the sequence is TSVIRLQKKVMELESKLNEAKEEFTSG. WD repeat units lie at residues 106-147, 148-189, 190-229, 232-271, 274-333, 336-377, and 379-410; these read GHRS…RTLK, GHTD…RTMH, GHDH…CVKT, GHRE…CKAE, EHEH…CLMT, GHDN…KTLN, and HEHF…WECR.

It belongs to the WD repeat LIS1/nudF family. Can self-associate. Component of the cytosolic PAF-AH (I) heterotetrameric enzyme, which is composed of PAFAH1B1 (beta), PAFAH1B2 (alpha2) and PAFAH1B3 (alpha1) subunits. The catalytic activity of the enzyme resides in the alpha1 (PAFAH1B3) and alpha2 (PAFAH1B2) subunits, whereas the beta subunit (PAFAH1B1) has regulatory activity. Trimer formation is not essential for the catalytic activity. Interacts with dynein, dynactin, nde1 and ndel1.

It is found in the cytoplasm. It localises to the cytoskeleton. The protein localises to the microtubule organizing center. The protein resides in the centrosome. Functionally, regulatory subunit (beta subunit) of the cytosolic type I platelet-activating factor (PAF) acetylhydrolase (PAF-AH (I)), an enzyme that catalyzes the hydrolyze of the acetyl group at the sn-2 position of PAF and its analogs and participates in PAF inactivation. Regulates the PAF-AH (I) activity in a catalytic dimer composition-dependent manner. Positively regulates the activity of the minus-end directed microtubule motor protein dynein. May enhance dynein-mediated microtubule sliding by targeting dynein to the microtubule plus end. Required for several dynein- and microtubule-dependent processes such as the maintenance of Golgi integrity, the peripheral transport of microtubule fragments and the coupling of the nucleus and centrosome. May be required for proliferation of neuronal precursors and neuronal migration. The protein is Lissencephaly-1 homolog (pafah1b1) of Xenopus laevis (African clawed frog).